The following is a 332-amino-acid chain: Oxygen-dependent coproporphyrinogen-III oxidase (332 aa).

S119 lines the coproporphyrinogen III pocket. H133 acts as the Proton donor in catalysis. Residues 135–137 (NVR) and 284–285 (GR) each bind coproporphyrinogen III.

The protein belongs to the aerobic coproporphyrinogen-III oxidase family. Homodimer.

It catalyses the reaction coproporphyrinogen III + O2 + 2 H(+) = protoporphyrinogen IX + 2 CO2 + 2 H2O. It functions in the pathway porphyrin-containing compound metabolism; protoporphyrin-IX biosynthesis; protoporphyrinogen-IX from coproporphyrinogen-III (O2 route): step 1/1. Functionally, involved in the heme biosynthesis. Catalyzes the aerobic oxidative decarboxylation of propionate groups of rings A and B of coproporphyrinogen-III to yield the vinyl groups in protoporphyrinogen-IX. The chain is Oxygen-dependent coproporphyrinogen-III oxidase (cpox) from Dictyostelium discoideum (Social amoeba).